The primary structure comprises 89 residues: MAEEEIDYNSQPCHAYACRIQDCLQRSGYNESKCTKLIDELYECCAKFYMSKGEDARSTSCPKPNLLKLKIQQRESKDVDAVLLEFAKK.

Residues 10 to 52 form the CHCH domain; it reads SQPCHAYACRIQDCLQRSGYNESKCTKLIDELYECCAKFYMSK. 2 short sequence motifs (cx9C motif) span residues 13–23 and 34–44; these read CHAYACRIQDC and CTKLIDELYEC. 2 disulfide bridges follow: Cys-13–Cys-44 and Cys-23–Cys-34.

This sequence belongs to the CMC4 family.

It is found in the mitochondrion intermembrane space. This chain is Cx9C motif-containing protein 4, mitochondrial (CMC4), found in Yarrowia lipolytica (strain CLIB 122 / E 150) (Yeast).